We begin with the raw amino-acid sequence, 334 residues long: Holliday junction branch migration complex subunit RuvB (334 aa).

The tract at residues 1–182 is large ATPase domain (RuvB-L); the sequence is MNERMVDQSM…FGVHLRLEYY (182 aa). Residues Leu21, Arg22, Gly63, Lys66, Thr67, Thr68, 129 to 131, Arg172, Tyr182, and Arg219 contribute to the ATP site; that span reads EDF. Thr67 contacts Mg(2+). Residues 183–253 form a small ATPAse domain (RuvB-S) region; the sequence is NESDLKEIII…TTKHALGLLQ (71 aa). The head domain (RuvB-H) stretch occupies residues 256–334; that stretch reads QHGLDYIDHK…HFAKSNEERE (79 aa). Arg292, Arg311, and Arg316 together coordinate DNA.

The protein belongs to the RuvB family. As to quaternary structure, homohexamer. Forms an RuvA(8)-RuvB(12)-Holliday junction (HJ) complex. HJ DNA is sandwiched between 2 RuvA tetramers; dsDNA enters through RuvA and exits via RuvB. An RuvB hexamer assembles on each DNA strand where it exits the tetramer. Each RuvB hexamer is contacted by two RuvA subunits (via domain III) on 2 adjacent RuvB subunits; this complex drives branch migration. In the full resolvosome a probable DNA-RuvA(4)-RuvB(12)-RuvC(2) complex forms which resolves the HJ.

The protein resides in the cytoplasm. It catalyses the reaction ATP + H2O = ADP + phosphate + H(+). In terms of biological role, the RuvA-RuvB-RuvC complex processes Holliday junction (HJ) DNA during genetic recombination and DNA repair, while the RuvA-RuvB complex plays an important role in the rescue of blocked DNA replication forks via replication fork reversal (RFR). RuvA specifically binds to HJ cruciform DNA, conferring on it an open structure. The RuvB hexamer acts as an ATP-dependent pump, pulling dsDNA into and through the RuvAB complex. RuvB forms 2 homohexamers on either side of HJ DNA bound by 1 or 2 RuvA tetramers; 4 subunits per hexamer contact DNA at a time. Coordinated motions by a converter formed by DNA-disengaged RuvB subunits stimulates ATP hydrolysis and nucleotide exchange. Immobilization of the converter enables RuvB to convert the ATP-contained energy into a lever motion, pulling 2 nucleotides of DNA out of the RuvA tetramer per ATP hydrolyzed, thus driving DNA branch migration. The RuvB motors rotate together with the DNA substrate, which together with the progressing nucleotide cycle form the mechanistic basis for DNA recombination by continuous HJ branch migration. Branch migration allows RuvC to scan DNA until it finds its consensus sequence, where it cleaves and resolves cruciform DNA. The chain is Holliday junction branch migration complex subunit RuvB from Staphylococcus aureus (strain bovine RF122 / ET3-1).